The primary structure comprises 148 residues: Cytochrome c oxidase subunit 6, mitochondrial (148 aa).

The transit peptide at 1–40 directs the protein to the mitochondrion; sequence MASFFRTAVRGPSAGLFRAVARPQPIAARVSLFSTSSRFR.

The protein belongs to the cytochrome c oxidase subunit 5A family. As to quaternary structure, component of the cytochrome c oxidase (complex IV, CIV), a multisubunit enzyme composed of 11 subunits. The complex is composed of a catalytic core of 3 subunits Cox1, Cox2 and Cox3, encoded in the mitochondrial DNA, and 8 supernumerary subunits Cox4, Cox5a/Cox5, Cox6, Cox7, Cox8, Cox7a/Cox9, Cox6b/Cox12 and Cox6a/Cox13, which are encoded in the nuclear genome. The complex exists as a monomer or a dimer and forms respiratory supercomplexes (SCs) in the inner mitochondrial membrane with NADH-ubiquinone oxidoreductase (complex I, CI) and ubiquinol-cytochrome c oxidoreductase (cytochrome b-c1 complex, complex III, CIII), resulting in various different assemblies (supercomplexes I(1)IV(1), I(1)III(3)IV(2), III(2)IV(1) and III(2)IV(2) as well as larger supercomplexes of compositions like I(1)III(2)IV(5-6)).

The protein resides in the mitochondrion inner membrane. It functions in the pathway energy metabolism; oxidative phosphorylation. Functionally, component of the cytochrome c oxidase, the last enzyme in the mitochondrial electron transport chain which drives oxidative phosphorylation. The respiratory chain contains 3 multisubunit complexes succinate dehydrogenase (complex II, CII), ubiquinol-cytochrome c oxidoreductase (cytochrome b-c1 complex, complex III, CIII) and cytochrome c oxidase (complex IV, CIV), that cooperate to transfer electrons derived from NADH and succinate to molecular oxygen, creating an electrochemical gradient over the inner membrane that drives transmembrane transport and the ATP synthase. Cytochrome c oxidase is the component of the respiratory chain that catalyzes the reduction of oxygen to water. Electrons originating from reduced cytochrome c in the intermembrane space (IMS) are transferred via the dinuclear copper A center (CU(A)) of Cox2 and heme A of Cox1 to the active site in Cox1, a binuclear center (BNC) formed by heme A3 and copper B (CU(B)). The BNC reduces molecular oxygen to 2 water molecules using 4 electrons from cytochrome c in the IMS and 4 protons from the mitochondrial matrix. The chain is Cytochrome c oxidase subunit 6, mitochondrial (cox-6) from Neurospora crassa (strain ATCC 24698 / 74-OR23-1A / CBS 708.71 / DSM 1257 / FGSC 987).